The primary structure comprises 313 residues: Homoserine O-succinyltransferase (313 aa).

C142 functions as the Acyl-thioester intermediate in the catalytic mechanism. 2 residues coordinate substrate: K163 and S192. H235 serves as the catalytic Proton acceptor. E237 is an active-site residue. Residue R249 coordinates substrate.

Belongs to the MetA family.

The protein localises to the cytoplasm. The enzyme catalyses L-homoserine + succinyl-CoA = O-succinyl-L-homoserine + CoA. The protein operates within amino-acid biosynthesis; L-methionine biosynthesis via de novo pathway; O-succinyl-L-homoserine from L-homoserine: step 1/1. Functionally, transfers a succinyl group from succinyl-CoA to L-homoserine, forming succinyl-L-homoserine. The protein is Homoserine O-succinyltransferase of Shewanella sp. (strain ANA-3).